Here is a 283-residue protein sequence, read N- to C-terminus: Phosphatidylglycerol--prolipoprotein diacylglyceryl transferase (283 aa).

Transmembrane regions (helical) follow at residues 17–37 (LAVR…TFLG), 56–76 (FLTW…VLFY), 92–112 (WEGG…IWLF), and 117–137 (GIGF…GLAS). Residue arginine 139 participates in a 1,2-diacyl-sn-glycero-3-phospho-(1'-sn-glycerol) binding. Helical transmembrane passes span 194-214 (PSQL…VWLF), 222-242 (GQVA…AEFA), and 255-275 (GLSM…VGFV).

The protein belongs to the Lgt family.

The protein resides in the cell inner membrane. It catalyses the reaction L-cysteinyl-[prolipoprotein] + a 1,2-diacyl-sn-glycero-3-phospho-(1'-sn-glycerol) = an S-1,2-diacyl-sn-glyceryl-L-cysteinyl-[prolipoprotein] + sn-glycerol 1-phosphate + H(+). Its pathway is protein modification; lipoprotein biosynthesis (diacylglyceryl transfer). Functionally, catalyzes the transfer of the diacylglyceryl group from phosphatidylglycerol to the sulfhydryl group of the N-terminal cysteine of a prolipoprotein, the first step in the formation of mature lipoproteins. This Neisseria meningitidis serogroup A / serotype 4A (strain DSM 15465 / Z2491) protein is Phosphatidylglycerol--prolipoprotein diacylglyceryl transferase.